The following is a 611-amino-acid chain: Probable potassium transport system protein Kup (611 aa).

The next 13 helical transmembrane spans lie at 24–44 (LVFG…FLFL), 55–75 (VSLI…FLAM), 102–122 (VAVF…ECVI), 143–163 (LIAQ…LFLF), 175–195 (FGPV…ISVA), 218–238 (LLGF…EALF), 252–272 (AWGF…AYLL), 275–295 (TDVI…LYIP), 296–316 (FLLL…SGIF), 344–364 (IYIN…LLIF), 374–394 (YGLA…AIFL), 400–420 (LYMG…LSTV), and 423–443 (ITHG…IVII).

This sequence belongs to the HAK/KUP transporter (TC 2.A.72) family.

Its subcellular location is the cell membrane. It catalyses the reaction K(+)(in) + H(+)(in) = K(+)(out) + H(+)(out). In terms of biological role, transport of potassium into the cell. Likely operates as a K(+):H(+) symporter. The polypeptide is Probable potassium transport system protein Kup (Methanospirillum hungatei JF-1 (strain ATCC 27890 / DSM 864 / NBRC 100397 / JF-1)).